The sequence spans 269 residues: Protein-L-isoaspartate O-methyltransferase (269 aa).

The disordered stretch occupies residues Met1–Gly53. Ser113 is an active-site residue.

This sequence belongs to the methyltransferase superfamily. L-isoaspartyl/D-aspartyl protein methyltransferase family.

It is found in the cytoplasm. It catalyses the reaction [protein]-L-isoaspartate + S-adenosyl-L-methionine = [protein]-L-isoaspartate alpha-methyl ester + S-adenosyl-L-homocysteine. Catalyzes the methyl esterification of L-isoaspartyl residues in peptides and proteins that result from spontaneous decomposition of normal L-aspartyl and L-asparaginyl residues. It plays a role in the repair and/or degradation of damaged proteins. The sequence is that of Protein-L-isoaspartate O-methyltransferase from Methylibium petroleiphilum (strain ATCC BAA-1232 / LMG 22953 / PM1).